The following is a 313-amino-acid chain: D-alanine--D-alanine ligase (313 aa).

The 197-residue stretch at 107–303 (KQAFAAAGLT…FEALVEQIAC (197 aa)) folds into the ATP-grasp domain. Residue 135–188 (PFGLPVVVKPVQEGSSVGVTIVKKPEDLQAALDEAFRYDTLVLVEKYIKGQEVQ) participates in ATP binding. Mg(2+)-binding residues include Asp256, Glu269, and Asn271.

This sequence belongs to the D-alanine--D-alanine ligase family. Mg(2+) serves as cofactor. It depends on Mn(2+) as a cofactor.

The protein resides in the cytoplasm. The enzyme catalyses 2 D-alanine + ATP = D-alanyl-D-alanine + ADP + phosphate + H(+). It participates in cell wall biogenesis; peptidoglycan biosynthesis. Cell wall formation. The protein is D-alanine--D-alanine ligase of Trichlorobacter lovleyi (strain ATCC BAA-1151 / DSM 17278 / SZ) (Geobacter lovleyi).